The following is a 486-amino-acid chain: Probable glucan endo-1,3-beta-glucosidase eglC (486 aa).

Positions 1–18 (MQLTQLLALALSLATSEA) are cleaved as a signal peptide. An N-linked (GlcNAc...) asparagine glycan is attached at N84. Catalysis depends on E128, which acts as the Proton donor. A glycan (N-linked (GlcNAc...) asparagine) is linked at N183. E239 (nucleophile) is an active-site residue. N-linked (GlcNAc...) asparagine glycosylation is found at N315, N386, N396, and N404. A disordered region spans residues 330–458 (AAAGGVAGGS…SSGAASPSST (129 aa)). 2 stretches are compositionally biased toward low complexity: residues 341–404 (GSAS…HGSN) and 413–424 (SVSNVSPSKSSS). The segment covering 430 to 442 (AATSMGASPSSVG) has biased composition (polar residues). Over residues 445-458 (GPSKSSGAASPSST) the composition is skewed to low complexity. G463 carries GPI-anchor amidated glycine lipidation. Positions 464–486 (AATSVSAPVVHVVLLALMMVIAA) are cleaved as a propeptide — removed in mature form.

It belongs to the glycosyl hydrolase 17 family. The GPI-anchor is attached to the protein in the endoplasmic reticulum and serves to target the protein to the cell surface. There, the glucosamine-inositol phospholipid moiety is cleaved off and the GPI-modified mannoprotein is covalently attached via its lipidless GPI glycan remnant to the 1,6-beta-glucan of the outer cell wall layer.

The protein localises to the cell membrane. It is found in the secreted. It localises to the cell wall. It carries out the reaction Hydrolysis of (1-&gt;3)-beta-D-glucosidic linkages in (1-&gt;3)-beta-D-glucans.. Its function is as follows. Glucanases play a role in cell expansion during growth, in cell-cell fusion during mating, and in spore release during sporulation. This enzyme may be involved in beta-glucan degradation and also function biosynthetically as a transglycosylase. This chain is Probable glucan endo-1,3-beta-glucosidase eglC (eglC), found in Aspergillus terreus (strain NIH 2624 / FGSC A1156).